We begin with the raw amino-acid sequence, 38 residues long: Beta-defensin 8 (38 aa).

3 disulfide bridges follow: Cys-7–Cys-36, Cys-14–Cys-29, and Cys-19–Cys-37.

It belongs to the beta-defensin family. As to expression, neutrophilic granules.

It localises to the secreted. Functionally, has bactericidal activity. Active against E.coli ML35 and S.aureus 502A. The chain is Beta-defensin 8 (DEFB8) from Bos taurus (Bovine).